A 428-amino-acid chain; its full sequence is Serine--tRNA ligase (428 aa).

235 to 237 (TAE) is a binding site for L-serine. 266-268 (RSE) is a binding site for ATP. An L-serine-binding site is contributed by Glu-289. 353–356 (EISS) contributes to the ATP binding site. Residue Ser-389 participates in L-serine binding.

This sequence belongs to the class-II aminoacyl-tRNA synthetase family. Type-1 seryl-tRNA synthetase subfamily. Homodimer. The tRNA molecule binds across the dimer.

The protein resides in the cytoplasm. It catalyses the reaction tRNA(Ser) + L-serine + ATP = L-seryl-tRNA(Ser) + AMP + diphosphate + H(+). It carries out the reaction tRNA(Sec) + L-serine + ATP = L-seryl-tRNA(Sec) + AMP + diphosphate + H(+). The protein operates within aminoacyl-tRNA biosynthesis; selenocysteinyl-tRNA(Sec) biosynthesis; L-seryl-tRNA(Sec) from L-serine and tRNA(Sec): step 1/1. Functionally, catalyzes the attachment of serine to tRNA(Ser). Is also able to aminoacylate tRNA(Sec) with serine, to form the misacylated tRNA L-seryl-tRNA(Sec), which will be further converted into selenocysteinyl-tRNA(Sec). The chain is Serine--tRNA ligase from Shewanella pealeana (strain ATCC 700345 / ANG-SQ1).